The sequence spans 551 residues: uncharacterized protein (551 aa).

The N-terminal 36 residues, 1–36 (MMALVRDRRAHYVMSIVIRWVHCFSSSLRGTFGTRW), are a transit peptide targeting the mitochondrion. Positions 203 to 315 (TNILLRKLKE…MDSRDRLREE (113 aa)) form a coiled coil. A disordered region spans residues 354–389 (REASLSPWPKSPPSTTALRPHSATMSVSSAGAQKAK). Residues 366-384 (PSTTALRPHSATMSVSSAG) show a composition bias toward polar residues. The stretch at 405 to 439 (KHGLESQIEALKANLENEKKKVERFRKEADRLNKS) forms a coiled coil. Residues 519 to 551 (LQLSPKGKLSESPKEESLEEPSMRQSSPAETVD) form a disordered region. Residues 541–551 (MRQSSPAETVD) are compositionally biased toward polar residues.

Interacts with NOD2.

It localises to the mitochondrion. This is an uncharacterized protein from Homo sapiens (Human).